The chain runs to 106 residues: UPF0145 protein BH0643 (106 aa).

It belongs to the UPF0145 family.

This chain is UPF0145 protein BH0643, found in Halalkalibacterium halodurans (strain ATCC BAA-125 / DSM 18197 / FERM 7344 / JCM 9153 / C-125) (Bacillus halodurans).